The sequence spans 121 residues: Probable intron-encoded DNA endonuclease aI1 (121 aa).

This sequence belongs to the LAGLIDADG endonuclease family.

The protein localises to the mitochondrion. Mitochondrial DNA endonuclease involved in intron homing. The protein is Probable intron-encoded DNA endonuclease aI1 (aI1) of Mycosarcoma maydis (Corn smut fungus).